A 251-amino-acid polypeptide reads, in one-letter code: Tryptophan synthase alpha chain (251 aa).

Active-site proton acceptor residues include Glu-36 and Asp-47.

The protein belongs to the TrpA family. Tetramer of two alpha and two beta chains.

The enzyme catalyses (1S,2R)-1-C-(indol-3-yl)glycerol 3-phosphate + L-serine = D-glyceraldehyde 3-phosphate + L-tryptophan + H2O. It functions in the pathway amino-acid biosynthesis; L-tryptophan biosynthesis; L-tryptophan from chorismate: step 5/5. Its function is as follows. The alpha subunit is responsible for the aldol cleavage of indoleglycerol phosphate to indole and glyceraldehyde 3-phosphate. This is Tryptophan synthase alpha chain from Thermococcus kodakarensis (strain ATCC BAA-918 / JCM 12380 / KOD1) (Pyrococcus kodakaraensis (strain KOD1)).